A 754-amino-acid chain; its full sequence is 5-methyltetrahydropteroyltriglutamate--homocysteine methyltransferase (754 aa).

5-methyltetrahydropteroyltri-L-glutamate contacts are provided by residues 15–18 (RELK) and K114. L-homocysteine contacts are provided by residues 430–432 (IGS) and E483. Residues 430–432 (IGS) and E483 contribute to the L-methionine site. 5-methyltetrahydropteroyltri-L-glutamate is bound by residues 514-515 (RC) and W560. D598 contributes to the L-homocysteine binding site. L-methionine is bound at residue D598. E604 contacts 5-methyltetrahydropteroyltri-L-glutamate. Zn(2+) contacts are provided by H641, C643, and E665. H694 functions as the Proton donor in the catalytic mechanism. Zn(2+) is bound at residue C726.

This sequence belongs to the vitamin-B12 independent methionine synthase family. Zn(2+) is required as a cofactor.

The catalysed reaction is 5-methyltetrahydropteroyltri-L-glutamate + L-homocysteine = tetrahydropteroyltri-L-glutamate + L-methionine. It functions in the pathway amino-acid biosynthesis; L-methionine biosynthesis via de novo pathway; L-methionine from L-homocysteine (MetE route): step 1/1. In terms of biological role, catalyzes the transfer of a methyl group from 5-methyltetrahydrofolate to homocysteine resulting in methionine formation. This is 5-methyltetrahydropteroyltriglutamate--homocysteine methyltransferase from Campylobacter jejuni subsp. jejuni serotype O:23/36 (strain 81-176).